We begin with the raw amino-acid sequence, 492 residues long: Histone-lysine N-methyltransferase PRDM7 (492 aa).

The tract at residues 1-22 (MSPERSQEESPEGDTERTERKP) is disordered. Residues 23-86 (MVKDAFKDIS…RRQAIKLQVD (64 aa)) enclose the KRAB-related domain. Residues 111-179 (EQSKHQKGMP…ELRRKETEGK (69 aa)) are disordered. The segment covering 135–150 (GTPNLLNTSDSEQAQK) has biased composition (polar residues). Residues 167–179 (LKLELRRKETEGK) are compositionally biased toward basic and acidic residues. Positions 244–358 (PGLRIGPSGI…PGCELLVWSG (115 aa)) constitute an SET domain.

It is found in the nucleus. The protein resides in the chromosome. It catalyses the reaction N(6),N(6)-dimethyl-L-lysyl(4)-[histone H3] + S-adenosyl-L-methionine = N(6),N(6),N(6)-trimethyl-L-lysyl(4)-[histone H3] + S-adenosyl-L-homocysteine + H(+). Its function is as follows. Histone methyltransferase that selectively methylates 'Lys-4' of dimethylated histone H3 (H3K4me2) to produce trimethylated 'Lys-4' histone H3 (H3K4me3). May play a role in epigenetic regulation of gene expression by defining an active chromatin state. In Homo sapiens (Human), this protein is Histone-lysine N-methyltransferase PRDM7.